A 220-amino-acid polypeptide reads, in one-letter code: Charged multivesicular body protein 2a (220 aa).

Positions 12-53 form a coiled coil; it reads EEMLRQNQRALNRAMRDLDRERQRLEQQEKKIIADIKKMAKQ. Residues 184–220 form a disordered region; sequence ATGGSLSVAAGKKAEPQPTLADADADLEERLNNLRRD. Residues 208 to 218 carry the MIT-interacting motif motif; that stretch reads ADLEERLNNLR. Residues 211–220 are compositionally biased toward basic and acidic residues; sequence EERLNNLRRD.

It belongs to the SNF7 family. Probable core component of the endosomal sorting required for transport complex III (ESCRT-III). ESCRT-III components are thought to multimerize to form a flat lattice on the perimeter membrane of the endosome.

It localises to the late endosome membrane. It is found in the cytoplasm. Functionally, probable core component of the endosomal sorting required for transport complex III (ESCRT-III) which is involved in multivesicular bodies (MVBs) formation and sorting of endosomal cargo proteins into MVBs. MVBs contain intraluminal vesicles (ILVs) that are generated by invagination and scission from the limiting membrane of the endosome and mostly are delivered to lysosomes enabling degradation of membrane proteins, such as stimulated growth factor receptors, lysosomal enzymes and lipids. This is Charged multivesicular body protein 2a (chmp2a) from Danio rerio (Zebrafish).